The following is a 356-amino-acid chain: NADH-quinone oxidoreductase subunit H (356 aa).

Helical transmembrane passes span 18-38 (IVMIAQSVLLLVVLLVAIAYI), 87-107 (GVFLLAPLVSCVLALAAWAVI), 120-140 (VGILFIFAISSLSIYGIIMAG), 166-186 (IGFVIITVLLCAGTLNLSAVV), 205-225 (ILNWYVWPLFPMFVVFYVSAL), 265-285 (AITTMCALATILFLGGWLPPI), 292-312 (WVPGVIWFALKLFFMFFLIAM), and 333-353 (FLPLSLVMVVIVAGVLHFAGI).

It belongs to the complex I subunit 1 family. In terms of assembly, NDH-1 is composed of 14 different subunits. Subunits NuoA, H, J, K, L, M, N constitute the membrane sector of the complex.

The protein localises to the cell inner membrane. It catalyses the reaction a quinone + NADH + 5 H(+)(in) = a quinol + NAD(+) + 4 H(+)(out). NDH-1 shuttles electrons from NADH, via FMN and iron-sulfur (Fe-S) centers, to quinones in the respiratory chain. The immediate electron acceptor for the enzyme in this species is believed to be ubiquinone. Couples the redox reaction to proton translocation (for every two electrons transferred, four hydrogen ions are translocated across the cytoplasmic membrane), and thus conserves the redox energy in a proton gradient. This subunit may bind ubiquinone. This Bradyrhizobium sp. (strain BTAi1 / ATCC BAA-1182) protein is NADH-quinone oxidoreductase subunit H.